The sequence spans 444 residues: Chitinase-like protein Idgf5 (444 aa).

A signal peptide spans 1–26; that stretch reads MMWIQKNPFLGLLLCSFLAFFQSTYA. A GH18 domain is found at 29–444; sequence GKLVCFYDAQ…PILRSIKFKL (416 aa). A disulfide bond links C33 and C60. N-linked (GlcNAc...) asparagine glycosylation is found at N289 and N311. Residues C349 and C429 are joined by a disulfide bond.

This sequence belongs to the glycosyl hydrolase 18 family. IDGF subfamily. Glycosylated.

Its subcellular location is the secreted. In terms of biological role, probably required to stimulate the proliferation, polarization and motility of imaginal disk cells. May act by stabilizing the binding of insulin-like peptides to its receptor through a simultaneous interaction with both molecules to form a multiprotein signaling complex. The chain is Chitinase-like protein Idgf5 (Idgf5) from Drosophila melanogaster (Fruit fly).